We begin with the raw amino-acid sequence, 495 residues long: Thioredoxin reductase SEP1 (495 aa).

Asp-37–Cys-54 is a binding site for FAD. Cys-54 and Cys-59 are oxidised to a cystine. His-468 functions as the Proton acceptor in the catalytic mechanism. A cross-link (cysteinyl-selenocysteine (Cys-Sec)) is located at residues Cys-493 to Sec-494. A non-standard amino acid (selenocysteine) is located at residue Sec-494.

This sequence belongs to the class-I pyridine nucleotide-disulfide oxidoreductase family. As to quaternary structure, homodimer. FAD is required as a cofactor. Post-translationally, the N-terminus is blocked.

It catalyses the reaction [thioredoxin]-dithiol + NADP(+) = [thioredoxin]-disulfide + NADPH + H(+). Activity was very low in selenium-depleted cells, but increased 4-fold to the same level as in selenium-sufficient cells for 70 hours after the addition of 10 nm selenite. The polypeptide is Thioredoxin reductase SEP1 (SEP1) (Emiliania huxleyi (Coccolithophore)).